A 181-amino-acid chain; its full sequence is MKIALFGGSFDPPHNGHNSVVLEALEKLDIDKLIIMPTYINPFKKSFSADEKQRFLWVKKLWGHLPKVEICDFEIRQKRPVPSIESVKYLYKLYNPSKFYLLIGADHLEKLHLWHDFEKLNSLVEFVIANRNDIGIPKNFKDLKTNKKIASSFIRDTLNTNEVCEEIKDEVKKYYEKLQKN.

The protein belongs to the NadD family.

The enzyme catalyses nicotinate beta-D-ribonucleotide + ATP + H(+) = deamido-NAD(+) + diphosphate. It functions in the pathway cofactor biosynthesis; NAD(+) biosynthesis; deamido-NAD(+) from nicotinate D-ribonucleotide: step 1/1. Functionally, catalyzes the reversible adenylation of nicotinate mononucleotide (NaMN) to nicotinic acid adenine dinucleotide (NaAD). The chain is Probable nicotinate-nucleotide adenylyltransferase from Campylobacter jejuni subsp. jejuni serotype O:23/36 (strain 81-176).